Here is a 468-residue protein sequence, read N- to C-terminus: ATP synthase subunit beta (468 aa).

148–155 contacts ATP; the sequence is GGAGVGKT.

This sequence belongs to the ATPase alpha/beta chains family. As to quaternary structure, F-type ATPases have 2 components, CF(1) - the catalytic core - and CF(0) - the membrane proton channel. CF(1) has five subunits: alpha(3), beta(3), gamma(1), delta(1), epsilon(1). CF(0) has three main subunits: a(1), b(2) and c(9-12). The alpha and beta chains form an alternating ring which encloses part of the gamma chain. CF(1) is attached to CF(0) by a central stalk formed by the gamma and epsilon chains, while a peripheral stalk is formed by the delta and b chains.

The protein resides in the cell inner membrane. The enzyme catalyses ATP + H2O + 4 H(+)(in) = ADP + phosphate + 5 H(+)(out). Its function is as follows. Produces ATP from ADP in the presence of a proton gradient across the membrane. The catalytic sites are hosted primarily by the beta subunits. This is ATP synthase subunit beta from Stenotrophomonas maltophilia (strain R551-3).